A 631-amino-acid polypeptide reads, in one-letter code: uncharacterized protein (631 aa).

9 helical membrane-spanning segments follow: residues V42–F62, A76–L96, V106–P128, A152–W172, A344–A364, S366–L386, I398–F418, M429–I449, and I464–L484.

The protein belongs to the YccS/YhfK family.

The protein localises to the cell membrane. This is an uncharacterized protein from Bacillus subtilis (strain 168).